A 284-amino-acid polypeptide reads, in one-letter code: D-tagatose-1,6-bisphosphate aldolase subunit GatY (284 aa).

D82 acts as the Proton donor in catalysis. Zn(2+) contacts are provided by H83 and H180. Position 181 (G181) interacts with dihydroxyacetone phosphate. Residue H208 coordinates Zn(2+). Dihydroxyacetone phosphate-binding positions include 209 to 211 (GAS) and 230 to 233 (NVAT).

This sequence belongs to the class II fructose-bisphosphate aldolase family. TagBP aldolase GatY subfamily. In terms of assembly, forms a complex with GatZ. Zn(2+) is required as a cofactor.

It catalyses the reaction D-tagatofuranose 1,6-bisphosphate = D-glyceraldehyde 3-phosphate + dihydroxyacetone phosphate. It functions in the pathway carbohydrate metabolism; D-tagatose 6-phosphate degradation; D-glyceraldehyde 3-phosphate and glycerone phosphate from D-tagatose 6-phosphate: step 2/2. Catalytic subunit of the tagatose-1,6-bisphosphate aldolase GatYZ, which catalyzes the reversible aldol condensation of dihydroxyacetone phosphate (DHAP or glycerone-phosphate) with glyceraldehyde 3-phosphate (G3P) to produce tagatose 1,6-bisphosphate (TBP). Requires GatZ subunit for full activity and stability. Is involved in the catabolism of galactitol. In Shigella sonnei (strain Ss046), this protein is D-tagatose-1,6-bisphosphate aldolase subunit GatY.